A 511-amino-acid chain; its full sequence is Maturase K (511 aa).

The protein belongs to the intron maturase 2 family. MatK subfamily.

Its subcellular location is the plastid. The protein localises to the chloroplast. Functionally, usually encoded in the trnK tRNA gene intron. Probably assists in splicing its own and other chloroplast group II introns. This is Maturase K from Bowiea volubilis (Climbing onion).